The sequence spans 729 residues: Bromo and FHA domain-containing protein DDB_G0267958 (729 aa).

The segment covering Leu46–Thr79 has biased composition (low complexity). The interval Leu46 to Ala83 is disordered. The 56-residue stretch at Leu112–Phe167 folds into the FHA domain. Composition is skewed to low complexity over residues Ile208–Ile221, Pro229–Thr275, and Pro283–Lys306. Disordered regions lie at residues Ile208–Lys361 and Ser403–Pro442. A compositionally biased stretch (acidic residues) spans Asp310 to Val341. Residues Asp315 to Lys352 are a coiled coil. Positions Pro406–Lys431 are enriched in low complexity. Residues Ser498–Ser617 form the Bromo domain. Residues Ser659–Asp718 are a coiled coil. Residues Ser659–Gln729 form a disordered region. Positions Gln668 to Gln729 are enriched in acidic residues.

The protein is Bromo and FHA domain-containing protein DDB_G0267958 of Dictyostelium discoideum (Social amoeba).